We begin with the raw amino-acid sequence, 847 residues long: Lethal(3)malignant brain tumor-like protein 1 (847 aa).

2 stretches are compositionally biased toward basic and acidic residues: residues 65 to 82 (FPRE…EKGV) and 144 to 155 (AVKEGHAKKDGD). 3 disordered regions span residues 65–87 (FPRE…SEPI), 142–163 (AEAV…PTSR), and 237–296 (VKKR…SEEK). MBT repeat units follow at residues 300–400 (WSWA…LQPP), 408–507 (FSWT…LTPP), and 516–611 (FIWE…LQPP). An interaction with monomethylated and dimethylated peptides region spans residues 473–480 (FDNWDDTY). The segment at 639-682 (SKYSFHHRKCPTPGCDGSGHVTGRFTAHYCLSGCPLAEKNQGKL) adopts a CCHHC-type zinc-finger fold. Residues Cys648, Cys653, His666, and Cys672 each coordinate Zn(2+). One can recognise an SAM domain in the interval 778-842 (WTIDEVFSFV…YNAILMFKNA (65 aa)).

In terms of assembly, homodimer.

It is found in the nucleus. Polycomb group (PcG) protein that specifically recognizes and binds mono- and dimethyllysine residues on target proteins, thereby acting as a 'reader' of a network of post-translational modifications. PcG proteins maintain the transcriptionally repressive state of genes: acts as a chromatin compaction factor by recognizing and binding mono- and dimethylated histone H1b/H1-4 at 'Lys-26' (H1bK26me1 and H1bK26me2) and histone H4 at 'Lys-20' (H4K20me1 and H4K20me2), leading to condense chromatin and repress transcription. This is Lethal(3)malignant brain tumor-like protein 1 (L3MBTL1) from Gallus gallus (Chicken).